The chain runs to 1861 residues: Polyketide synthase 2 (1861 aa).

The region spanning 109-525 (DSKIAIIGMS…GGNSALLLED (417 aa)) is the Ketosynthase family 3 (KS3) domain. Catalysis depends on for beta-ketoacyl synthase activity residues Cys-264, His-399, and His-441. A malonyl-CoA:ACP transacylase (MAT) domain region spans residues 626–931 (GFVFSGQGAQ…PSLHRKDDGW (306 aa)). The For acyl/malonyl transferase activity role is filled by Ser-716. Positions 1008-1312 (TSSVQKVIQQ…VFGGMTVLPP (305 aa)) are product template (PT) domain. The N-terminal hotdog fold stretch occupies residues 1012-1146 (QKVIQQTDGP…CILRFADPKS (135 aa)). One can recognise a PKS/mFAS DH domain in the interval 1012-1318 (QKVIQQTDGP…VLPPRRGADA (307 aa)). The active-site Proton acceptor; for dehydratase activity is His-1045. The segment at 1174-1318 (DSLLSKGIVY…VLPPRRGADA (145 aa)) is C-terminal hotdog fold. Asp-1232 serves as the catalytic Proton donor; for dehydratase activity. The Carrier 1 domain maps to 1356 to 1433 (SPQSGAIHRI…ELRLFLAADQ (78 aa)). Position 1393 is an O-(pantetheine 4'-phosphoryl)serine (Ser-1393). Positions 1441-1470 (CESSNGQHTPQTSDKGSGTLTAQKPDHDTD) are disordered. Residues 1442–1462 (ESSNGQHTPQTSDKGSGTLTA) are compositionally biased toward polar residues. In terms of domain architecture, Carrier 2 spans 1472 to 1546 (EMTLNRVCAI…SLQKTLRGTE (75 aa)). An O-(pantetheine 4'-phosphoryl)serine modification is found at Ser-1506. The tract at residues 1582-1855 (ASAPHATSIL…IIEMSNLIGD (274 aa)) is thioesterase (TE) domain. The For thioesterase activity role is filled by Ser-1685.

Functionally, polyketide synthase; part of the Pks2 gene cluster that mediates the formation of infectious structures (appressoria), enabling these fungi to kill insects faster. The product of the Pks2 gene cluster is different from the one of Pks1 and has still not been identified. The polypeptide is Polyketide synthase 2 (Metarhizium acridum (strain CQMa 102)).